A 205-amino-acid chain; its full sequence is Small ribosomal subunit protein uS4 (205 aa).

A disordered region spans residues 1–49 (MSKRQSAKYKLDRRMGENIWGRPKSPVNRREYGPGQHGQRRKGKLSDFG). Residues 94 to 157 (SRLDAIVFRA…KQLTVVLESV (64 aa)) form the S4 RNA-binding domain.

It belongs to the universal ribosomal protein uS4 family. Part of the 30S ribosomal subunit. Contacts protein S5. The interaction surface between S4 and S5 is involved in control of translational fidelity.

Its function is as follows. One of the primary rRNA binding proteins, it binds directly to 16S rRNA where it nucleates assembly of the body of the 30S subunit. Functionally, with S5 and S12 plays an important role in translational accuracy. This chain is Small ribosomal subunit protein uS4, found in Chelativorans sp. (strain BNC1).